Reading from the N-terminus, the 22-residue chain is Peptide PGLa-B1 (22 aa).

Position 22 is a leucine amide (Leu-22).

Expressed by the skin glands.

The protein resides in the secreted. In terms of biological role, has antibacterial and antifungal activity. This Xenopus borealis (Kenyan clawed frog) protein is Peptide PGLa-B1.